Reading from the N-terminus, the 419-residue chain is MNIIDELEWRGAIYQQTDEEGLRKWVEEKQISLYCGIDPSGDSMHIGHLIPFMILRRFQNAGHRPIILVGGATGTIGDPSGKKEERKLQSMEQISKNVESLRVQLGKIFDFEGNSAASMVNNYDWTKDVSILDFLRDYGKEFNVNTMLSKDIVASRLEVGISFTEFAYQILQAMDFNHLYEFNDCRLQIGGSDQWGNITAGLDLIRKKQGENAKAFGLTIPLLTKADGTKFGKSEGGAIWLNPEKTTPYEFYQFWINTDDRDVVKYLKYFTFLTEAEIDELAKQVETEPHLRAAQKTLAAEMTKFVHSEEALEQALKISKALFSGDVKALTADEIEQGFKDVPTFVAEDSEANLVDWLVTLGIEPSKRQAREDVGNGAIYINGERQQDLEKIMDASDRIENKFTIVRRGKKKYFLVSYK.

Tyr34 is a binding site for L-tyrosine. The 'HIGH' region motif lies at 39 to 48; sequence PSGDSMHIGH. Tyr168 and Gln172 together coordinate L-tyrosine. A 'KMSKS' region motif is present at residues 230–234; it reads KFGKS. Lys233 serves as a coordination point for ATP. The S4 RNA-binding domain occupies 352 to 418; that stretch reads ANLVDWLVTL…GKKKYFLVSY (67 aa).

It belongs to the class-I aminoacyl-tRNA synthetase family. TyrS type 1 subfamily. As to quaternary structure, homodimer.

The protein resides in the cytoplasm. The enzyme catalyses tRNA(Tyr) + L-tyrosine + ATP = L-tyrosyl-tRNA(Tyr) + AMP + diphosphate + H(+). In terms of biological role, catalyzes the attachment of tyrosine to tRNA(Tyr) in a two-step reaction: tyrosine is first activated by ATP to form Tyr-AMP and then transferred to the acceptor end of tRNA(Tyr). The polypeptide is Tyrosine--tRNA ligase (Listeria monocytogenes serovar 1/2a (strain ATCC BAA-679 / EGD-e)).